Consider the following 101-residue polypeptide: Small ribosomal subunit protein uS14 (101 aa).

Belongs to the universal ribosomal protein uS14 family. Part of the 30S ribosomal subunit. Contacts proteins S3 and S10.

Its function is as follows. Binds 16S rRNA, required for the assembly of 30S particles and may also be responsible for determining the conformation of the 16S rRNA at the A site. The sequence is that of Small ribosomal subunit protein uS14 from Paenarthrobacter aurescens (strain TC1).